The primary structure comprises 93 residues: MDGIKYAVFTEKSIRLLGNNQYTSNVESGSTRTEIKHWIELFFGVKVVAMNSHRLPGKGRRMGPIMRHTMHYRRMIITLQPGYSIPPLIEKRT.

The protein belongs to the universal ribosomal protein uL23 family. As to quaternary structure, part of the 50S ribosomal subunit.

It is found in the plastid. It localises to the chloroplast. Binds to 23S rRNA. The protein is Large ribosomal subunit protein uL23cz/uL23cy (rpl23-A) of Nymphaea alba (White water-lily).